We begin with the raw amino-acid sequence, 418 residues long: Serine--tRNA ligase (418 aa).

231–233 (TAE) contributes to the L-serine binding site. ATP is bound at residue 262-264 (RRE). Glutamate 285 is a binding site for L-serine. 349–352 (EISS) serves as a coordination point for ATP. Serine 384 contacts L-serine.

The protein belongs to the class-II aminoacyl-tRNA synthetase family. Type-1 seryl-tRNA synthetase subfamily. Homodimer. The tRNA molecule binds across the dimer.

It is found in the cytoplasm. It catalyses the reaction tRNA(Ser) + L-serine + ATP = L-seryl-tRNA(Ser) + AMP + diphosphate + H(+). The catalysed reaction is tRNA(Sec) + L-serine + ATP = L-seryl-tRNA(Sec) + AMP + diphosphate + H(+). Its pathway is aminoacyl-tRNA biosynthesis; selenocysteinyl-tRNA(Sec) biosynthesis; L-seryl-tRNA(Sec) from L-serine and tRNA(Sec): step 1/1. In terms of biological role, catalyzes the attachment of serine to tRNA(Ser). Is also able to aminoacylate tRNA(Sec) with serine, to form the misacylated tRNA L-seryl-tRNA(Sec), which will be further converted into selenocysteinyl-tRNA(Sec). The polypeptide is Serine--tRNA ligase (Coprothermobacter proteolyticus (strain ATCC 35245 / DSM 5265 / OCM 4 / BT)).